The sequence spans 70 residues: ATP synthase subunit epsilon, mitochondrial (70 aa).

Belongs to the eukaryotic ATPase epsilon family. F-type ATPases have 2 components, CF(1) - the catalytic core - and CF(0) - the membrane proton channel. CF(1) has five subunits: alpha(3), beta(3), gamma(1), delta(1), epsilon(1). CF(0) has three main subunits: a, b and c.

It is found in the mitochondrion. Its subcellular location is the mitochondrion inner membrane. Functionally, mitochondrial membrane ATP synthase (F(1)F(0) ATP synthase or Complex V) produces ATP from ADP in the presence of a proton gradient across the membrane which is generated by electron transport complexes of the respiratory chain. F-type ATPases consist of two structural domains, F(1) - containing the extramembraneous catalytic core, and F(0) - containing the membrane proton channel, linked together by a central stalk and a peripheral stalk. During catalysis, ATP synthesis in the catalytic domain of F(1) is coupled via a rotary mechanism of the central stalk subunits to proton translocation. Part of the complex F(1) domain and of the central stalk which is part of the complex rotary element. Rotation of the central stalk against the surrounding alpha(3)beta(3) subunits leads to hydrolysis of ATP in three separate catalytic sites on the beta subunits. The protein is ATP synthase subunit epsilon, mitochondrial of Zea mays (Maize).